The following is a 102-amino-acid chain: UPF0058 protein MTH_224 (102 aa).

It belongs to the UPF0058 family.

In Methanothermobacter thermautotrophicus (strain ATCC 29096 / DSM 1053 / JCM 10044 / NBRC 100330 / Delta H) (Methanobacterium thermoautotrophicum), this protein is UPF0058 protein MTH_224.